The primary structure comprises 301 residues: Protoheme IX farnesyltransferase (301 aa).

The next 9 helical transmembrane spans lie at 9–29, 42–62, 89–109, 113–133, 142–162, 168–188, 211–231, 232–252, and 280–300; these read VLAYIALTKPRVIELLLVATI, IALILSTLFGGWMGAASANSL, TSHAFVFGMTLGVASFLWLWW, LLAGCLVVLTIAFYVLVYTMV, VVWGGAAGCMPVMVGWSAVTG, PIVLFLVIFFWTPPHTWALAM, VTKQILLYSWAMVITSLTLVP, AAGVVYAAVTLVAGAWFLLMA, and VVFVGLAVDSVLGLQTVGSLL.

The protein belongs to the UbiA prenyltransferase family. Protoheme IX farnesyltransferase subfamily.

It is found in the cell membrane. The enzyme catalyses heme b + (2E,6E)-farnesyl diphosphate + H2O = Fe(II)-heme o + diphosphate. It functions in the pathway porphyrin-containing compound metabolism; heme O biosynthesis; heme O from protoheme: step 1/1. In terms of biological role, converts heme B (protoheme IX) to heme O by substitution of the vinyl group on carbon 2 of heme B porphyrin ring with a hydroxyethyl farnesyl side group. This Rhodococcus jostii (strain RHA1) protein is Protoheme IX farnesyltransferase.